We begin with the raw amino-acid sequence, 130 residues long: Cyclin-dependent kinase 4 inhibitor B (130 aa).

ANK repeat units follow at residues 5-34 (GSDAGLATAAARGQVETVRQLLEAGADPNA), 38-66 (FGRRPIQVMMMGSAQVAELLLLHGAEPNC), 71-100 (TLTRPVHDAAREGFLDTLMVLHKAGARLDV), and 104-130 (WGRLPVDLAEEQGHRDIARYLHAATGD). Thr12 is modified (phosphothreonine).

It belongs to the CDKN2 cyclin-dependent kinase inhibitor family. As to quaternary structure, heterodimer of CDKN2B with CDK4 or CDK6. In terms of tissue distribution, expression abundant in lung, less abundant in testis, barely detectable in liver, and not detectable in neonatal kidney, adult kidney, brain, heart, or spleen.

Functionally, interacts strongly with CDK4 and CDK6. Potent inhibitor. Potential effector of TGF-beta induced cell cycle arrest. In Rattus norvegicus (Rat), this protein is Cyclin-dependent kinase 4 inhibitor B (Cdkn2b).